A 162-amino-acid polypeptide reads, in one-letter code: MKTMDAQEILRCYAQGQRDFSHINLVRVCLSNASLIGAQLIFVDLGGANLTRAQLDSATLKNANLALANMTEVCLIYADLSNADLSGANLVGADLTNADLSGAKLGGADLRKANLSEASLRGADLRGVNLIEANLTNTDFSEADLTGAYISDGAVINVVNLS.

Pentapeptide repeat domains are found at residues 33–72, 73–112, and 113–152; these read ASLI…NMTE, VCLI…DLRK, and ANLS…YISD.

This is an uncharacterized protein from Synechocystis sp. (strain ATCC 27184 / PCC 6803 / Kazusa).